The primary structure comprises 140 residues: Large ribosomal subunit protein bL34m (140 aa).

This sequence belongs to the bacterial ribosomal protein bL34 family. Component of the mitochondrial large ribosomal subunit (mt-LSU). Mature N.crassa 74S mitochondrial ribosomes consist of a small (37S) and a large (54S) subunit. The 37S small subunit contains a 16S ribosomal RNA (16S mt-rRNA) and 32 different proteins. The 54S large subunit contains a 23S rRNA (23S mt-rRNA) and 42 different proteins.

The protein localises to the mitochondrion. Its function is as follows. Component of the mitochondrial ribosome (mitoribosome), a dedicated translation machinery responsible for the synthesis of mitochondrial genome-encoded proteins, including at least some of the essential transmembrane subunits of the mitochondrial respiratory chain. The mitoribosomes are attached to the mitochondrial inner membrane and translation products are cotranslationally integrated into the membrane. The protein is Large ribosomal subunit protein bL34m (mrpl34) of Neurospora crassa (strain ATCC 24698 / 74-OR23-1A / CBS 708.71 / DSM 1257 / FGSC 987).